We begin with the raw amino-acid sequence, 507 residues long: ATP synthase subunit alpha, chloroplastic (507 aa).

170-177 provides a ligand contact to ATP; that stretch reads GDRQTGKT.

This sequence belongs to the ATPase alpha/beta chains family. F-type ATPases have 2 components, CF(1) - the catalytic core - and CF(0) - the membrane proton channel. CF(1) has five subunits: alpha(3), beta(3), gamma(1), delta(1), epsilon(1). CF(0) has four main subunits: a, b, b' and c.

It is found in the plastid. It localises to the chloroplast thylakoid membrane. The catalysed reaction is ATP + H2O + 4 H(+)(in) = ADP + phosphate + 5 H(+)(out). Its function is as follows. Produces ATP from ADP in the presence of a proton gradient across the membrane. The alpha chain is a regulatory subunit. The chain is ATP synthase subunit alpha, chloroplastic from Lemna minor (Common duckweed).